Here is a 23-residue protein sequence, read N- to C-terminus: Septenin 2c (23 aa).

In terms of tissue distribution, expressed in skin granular glands.

The protein resides in the secreted. Functionally, may act as an antimicrobial peptide. The protein is Septenin 2c of Osteopilus septentrionalis (Cuban treefrog).